The chain runs to 144 residues: Ribosome-binding factor A (144 aa).

Disordered regions lie at residues methionine 1–valine 22 and threonine 125–glutamine 144. The span at glutamine 134 to glutamine 144 shows a compositional bias: acidic residues.

The protein belongs to the RbfA family. In terms of assembly, monomer. Binds 30S ribosomal subunits, but not 50S ribosomal subunits or 70S ribosomes.

It localises to the cytoplasm. In terms of biological role, one of several proteins that assist in the late maturation steps of the functional core of the 30S ribosomal subunit. Associates with free 30S ribosomal subunits (but not with 30S subunits that are part of 70S ribosomes or polysomes). Required for efficient processing of 16S rRNA. May interact with the 5'-terminal helix region of 16S rRNA. This is Ribosome-binding factor A from Bradyrhizobium diazoefficiens (strain JCM 10833 / BCRC 13528 / IAM 13628 / NBRC 14792 / USDA 110).